The chain runs to 216 residues: MTQDSRFPNLFILDHPLIQHKLSHMRDRDTSTRTFRELLREITLLMGYEITRNLPMTTRRVSTPLVDIDAPVIAGKKLAIVPVLRAGVGMSDGLLELIPSARVGHIGVYRDDDHRPVEYLVRLPDLEDRIFILCDPMVATGYSAVHAIDVLKRRGVAGENISFLALVAAPEGVQVFQDAHPDVKLYVASLDSHLNEHAYIIPGLGDAGDRLFGTKN.

Residues Arg85, Arg110, and Asp135 to Ser143 each bind 5-phospho-alpha-D-ribose 1-diphosphate. Uracil contacts are provided by residues Ile200 and Gly205–Ala207. Asp206 contributes to the 5-phospho-alpha-D-ribose 1-diphosphate binding site.

Belongs to the UPRTase family. It depends on Mg(2+) as a cofactor.

It carries out the reaction UMP + diphosphate = 5-phospho-alpha-D-ribose 1-diphosphate + uracil. It participates in pyrimidine metabolism; UMP biosynthesis via salvage pathway; UMP from uracil: step 1/1. With respect to regulation, allosterically activated by GTP. In terms of biological role, catalyzes the conversion of uracil and 5-phospho-alpha-D-ribose 1-diphosphate (PRPP) to UMP and diphosphate. In Paraburkholderia phymatum (strain DSM 17167 / CIP 108236 / LMG 21445 / STM815) (Burkholderia phymatum), this protein is Uracil phosphoribosyltransferase.